We begin with the raw amino-acid sequence, 65 residues long: Large ribosomal subunit protein bL35 (65 aa).

The disordered stretch occupies residues 1–26 (MPKMKTNKSAQKRFKKTGSGRFKCKQ). The span at 10–26 (AQKRFKKTGSGRFKCKQ) shows a compositional bias: basic residues.

The protein belongs to the bacterial ribosomal protein bL35 family.

This chain is Large ribosomal subunit protein bL35, found in Hydrogenovibrio crunogenus (strain DSM 25203 / XCL-2) (Thiomicrospira crunogena).